We begin with the raw amino-acid sequence, 627 residues long: Protein EXECUTER 2, chloroplastic (627 aa).

Disordered stretches follow at residues 1 to 34 (MSAA…PSAA), 212 to 277 (PTKG…AKDS), and 308 to 359 (EAEL…SKSP). A chloroplast-targeting transit peptide spans 1 to 45 (MSAATACASPAAARPPLHIPLRSPPSAAHLPSAAASRRASSAACR). Residues 217–229 (SSASSVSSATAES) show a composition bias toward low complexity. Acidic residues-rich tracts occupy residues 308–321 (EAEL…ELVQ) and 331–353 (SLED…SDSA).

The protein localises to the plastid. The protein resides in the chloroplast. Together with EX1, enables higher plants to perceive singlet oxygen as a stress signal in plastid that activates a genetically determined nuclear stress response program which triggers a programmed cell death (PCD). This transfer of singlet oxygen-induced stress-related signals from the plastid to the nucleus that triggers genetically controlled PCD pathway is unique to photosynthetic eukaryotes and operates under mild stress conditions, impeding photosystem II (PSII) without causing photooxidative damage of the plant. This is Protein EXECUTER 2, chloroplastic from Oryza sativa subsp. japonica (Rice).